The sequence spans 433 residues: Protein root UVB sensitive 2, chloroplastic (433 aa).

This sequence belongs to the RUS1 family. In terms of assembly, interacts (via the DUF647 domain) with RUS1 (via the DUF647 domain). As to expression, expressed throughout the plant, with a higher expression near the root apical meristem, in the cortex region of the root elongation zone, in lateral roots and emerging lateral roots. Not detected in extreme root apical meristem or root cap.

It is found in the plastid. In terms of biological role, involved in a root UV-B sensing pathway and in the protection against the hypersensitivity to very low-fluence-rate (VLF) UV-B. RSU1 and RUS2 are probably both negative modulators of the same UV-B perception pathway, which when overstimulated in the roots causes a block to postgermination development. Required for polar auxin transport and to maintain the normal levels of PIN proteins in the root. The polypeptide is Protein root UVB sensitive 2, chloroplastic (Arabidopsis thaliana (Mouse-ear cress)).